The following is a 423-amino-acid chain: Histone acetyltransferase type B subunit 2 (423 aa).

WD repeat units follow at residues 138–174, 175–224, 228–268, 271–311, and 315–355; these read PHIEEVIRARYMPANSNIIATINGKGTISIFDRTLEE, SKAQ…KPKS, SHDD…EPVK, PTAS…SPLH, and GHQD…AEQS. The interaction with the histone H4 N-terminus stretch occupies residues 357–361; the sequence is DDADD. The stretch at 372–412 is one WD 6 repeat; that stretch reads GHRSPVNEFSFNPQIPWLLASTEEDNVIQAWKVSMKLVNAS.

The protein belongs to the WD repeat RBAP46/RBAP48/MSI1 family. Component of the HAT-B complex composed of at least HAT1 and HAT2. The HAT-B complex binds to histone H4 tail.

It localises to the cytoplasm. It is found in the nucleus. In terms of biological role, regulatory subunit of the histone acetylase B (HAT-B) complex. The complex acetylates 'Lys-12' of histone H4 which is required for telomeric silencing. The sequence is that of Histone acetyltransferase type B subunit 2 (HAT2) from Eremothecium gossypii (strain ATCC 10895 / CBS 109.51 / FGSC 9923 / NRRL Y-1056) (Yeast).